Reading from the N-terminus, the 160-residue chain is Nucleotide-binding protein Bpet3698 (160 aa).

It belongs to the YajQ family.

Functionally, nucleotide-binding protein. This Bordetella petrii (strain ATCC BAA-461 / DSM 12804 / CCUG 43448) protein is Nucleotide-binding protein Bpet3698.